The primary structure comprises 98 residues: NADH-ubiquinone oxidoreductase chain 4L (98 aa).

Transmembrane regions (helical) follow at residues 1-21 (MMSINLNLIMAFSLALAGVLI), 28-48 (STLLCLEGMMLSLFILMALII), and 59-79 (APLILLVFSACEAGVGLALLV).

Belongs to the complex I subunit 4L family. Core subunit of respiratory chain NADH dehydrogenase (Complex I) which is composed of 45 different subunits.

It is found in the mitochondrion inner membrane. It catalyses the reaction a ubiquinone + NADH + 5 H(+)(in) = a ubiquinol + NAD(+) + 4 H(+)(out). Its function is as follows. Core subunit of the mitochondrial membrane respiratory chain NADH dehydrogenase (Complex I) which catalyzes electron transfer from NADH through the respiratory chain, using ubiquinone as an electron acceptor. Part of the enzyme membrane arm which is embedded in the lipid bilayer and involved in proton translocation. This chain is NADH-ubiquinone oxidoreductase chain 4L (MT-ND4L), found in Lagostrophus fasciatus (Banded hare-wallaby).